The sequence spans 153 residues: UPF0251 protein Daud_0090 (153 aa).

Positions 129–138 (ELMTRPERCS) are enriched in basic and acidic residues. The interval 129 to 153 (ELMTRPERCSRPKRGAGKYRVPKKR) is disordered. A compositionally biased stretch (basic residues) spans 139–153 (RPKRGAGKYRVPKKR).

It belongs to the UPF0251 family.

This Desulforudis audaxviator (strain MP104C) protein is UPF0251 protein Daud_0090.